A 473-amino-acid polypeptide reads, in one-letter code: UDP-N-acetylmuramate--L-alanine ligase (473 aa).

ATP is bound at residue 112-118 (GTHGKTT).

It belongs to the MurCDEF family.

The protein localises to the cytoplasm. It catalyses the reaction UDP-N-acetyl-alpha-D-muramate + L-alanine + ATP = UDP-N-acetyl-alpha-D-muramoyl-L-alanine + ADP + phosphate + H(+). It functions in the pathway cell wall biogenesis; peptidoglycan biosynthesis. In terms of biological role, cell wall formation. This Nitrosomonas eutropha (strain DSM 101675 / C91 / Nm57) protein is UDP-N-acetylmuramate--L-alanine ligase.